Reading from the N-terminus, the 405-residue chain is Sarcosine oxidase subunit beta (405 aa).

Residues glycine 31, histidine 32, glutamate 53, asparagine 61, methionine 62, threonine 66, and isoleucine 68 each coordinate FAD. The residue at position 173 (histidine 173) is a Tele-8alpha-FMN histidine. Positions 197, 354, 357, and 359 each coordinate FAD.

Belongs to the SoxB family. As to quaternary structure, heterotetramer composed of subunits alpha (SoxA), beta (SoxB), gamma (SoxG) and delta (SoxD). FAD is required as a cofactor. It depends on FMN as a cofactor.

It is found in the cytoplasm. It catalyses the reaction sarcosine + (6S)-5,6,7,8-tetrahydrofolate + O2 = (6R)-5,10-methylene-5,6,7,8-tetrahydrofolate + glycine + H2O2. The enzyme catalyses sarcosine + O2 + H2O = formaldehyde + glycine + H2O2. Functionally, in the presence of tetrahydrofolate, catalyzes the oxidative demethylation of sarcosine to yield glycine, 5,10-methylenetetrahydrofolate and hydrogen peroxide. In the absence of tetrahydrofolate, catalyzes the oxidative demethylation of sarcosine to yield glycine, formaldehyde and hydrogen peroxide. The polypeptide is Sarcosine oxidase subunit beta (soxB) (Arthrobacter sp).